The chain runs to 220 residues: Large ribosomal subunit protein uL10c (220 aa).

The transit peptide at 1–41 directs the protein to the chloroplast; sequence MEVALLSFSSSLSPLCHQRISTLTPKTSNSPNYPRLPVIRS.

It belongs to the universal ribosomal protein uL10 family. In terms of assembly, part of the 50S ribosomal subunit.

It is found in the plastid. The protein localises to the chloroplast. This protein binds directly to 23S ribosomal RNA. This Arabidopsis thaliana (Mouse-ear cress) protein is Large ribosomal subunit protein uL10c (RPL10).